The following is a 244-amino-acid chain: tRNA pseudouridine synthase A (244 aa).

Asp-52 (nucleophile) is an active-site residue. Tyr-111 contacts substrate.

It belongs to the tRNA pseudouridine synthase TruA family. Homodimer.

It carries out the reaction uridine(38/39/40) in tRNA = pseudouridine(38/39/40) in tRNA. Functionally, formation of pseudouridine at positions 38, 39 and 40 in the anticodon stem and loop of transfer RNAs. This Thermosipho africanus (strain TCF52B) protein is tRNA pseudouridine synthase A.